A 388-amino-acid polypeptide reads, in one-letter code: Succinate--CoA ligase [ADP-forming] subunit beta (388 aa).

The ATP-grasp domain maps to 9-244; that stretch reads KEILRKYNVP…LDEEDANEIE (236 aa). ATP contacts are provided by residues Lys-46, 53 to 55, Glu-99, Ala-102, and Glu-107; that span reads GRG. The Mg(2+) site is built by Asn-199 and Asp-213. Residues Asn-264 and 321–323 each bind substrate; that span reads GIM.

This sequence belongs to the succinate/malate CoA ligase beta subunit family. As to quaternary structure, heterotetramer of two alpha and two beta subunits. Mg(2+) is required as a cofactor.

It carries out the reaction succinate + ATP + CoA = succinyl-CoA + ADP + phosphate. The enzyme catalyses GTP + succinate + CoA = succinyl-CoA + GDP + phosphate. The protein operates within carbohydrate metabolism; tricarboxylic acid cycle; succinate from succinyl-CoA (ligase route): step 1/1. Succinyl-CoA synthetase functions in the citric acid cycle (TCA), coupling the hydrolysis of succinyl-CoA to the synthesis of either ATP or GTP and thus represents the only step of substrate-level phosphorylation in the TCA. The beta subunit provides nucleotide specificity of the enzyme and binds the substrate succinate, while the binding sites for coenzyme A and phosphate are found in the alpha subunit. This Cupriavidus taiwanensis (strain DSM 17343 / BCRC 17206 / CCUG 44338 / CIP 107171 / LMG 19424 / R1) (Ralstonia taiwanensis (strain LMG 19424)) protein is Succinate--CoA ligase [ADP-forming] subunit beta.